The following is a 164-amino-acid chain: Reticulon-like protein B22 (164 aa).

The Reticulon domain maps to 1–164 (MGEMGKAMGL…ILEQEAHSDT (164 aa)). Helical transmembrane passes span 30–50 (SLFSDVFIVLLCSLAILGLLF) and 117–137 (LISGVTVAYAGLCLFCLSMLC).

It localises to the endoplasmic reticulum membrane. The sequence is that of Reticulon-like protein B22 (RTNLB22) from Arabidopsis thaliana (Mouse-ear cress).